A 1120-amino-acid polypeptide reads, in one-letter code: ISWI chromatin-remodeling complex ATPase ISW2 (1120 aa).

The segment covering 1-16 has biased composition (basic and acidic residues); that stretch reads MTTQQEEQRSDTKNSK. Disordered stretches follow at residues 1 to 58 and 129 to 153; these read MTTQ…VEDR and LSKS…EDAE. S17 and S19 each carry phosphoserine. Residues 47 to 58 are compositionally biased toward basic and acidic residues; that stretch reads LSDKEIYTVEDR. A Helicase ATP-binding domain is found at 196-361; that stretch reads ISLHENKLSG…WALLNFLLPD (166 aa). Residue 209–216 coordinates ATP; sequence DEMGLGKT. The DEAH box motif lies at 312-315; it reads DEAH. The region spanning 494–645 is the Helicase C-terminal domain; the sequence is ILDKLLKRLK…QLVIQQGTGK (152 aa). Disordered regions lie at residues 764-783 and 828-853; these read GGGS…PRAP and NEGS…KGHE. Phosphoserine is present on S831. One can recognise an SANT domain in the interval 886–938; it reads KAFTNWNKRDFMAFINACAKYGRDDMENIKKSIDSKTPEEVEVYAKIFWERLK. Residues 1062 to 1120 are disordered; the sequence is PDANKKKRSRTSATREDTPLSQNESTRASTVPNLPTTMVTNQKDTNDHVDKRTKIDQEA. Residue T1079 is modified to Phosphothreonine. Positions 1080 to 1104 are enriched in polar residues; that stretch reads PLSQNESTRASTVPNLPTTMVTNQK. Phosphoserine is present on S1082. The segment covering 1105–1120 has biased composition (basic and acidic residues); the sequence is DTNDHVDKRTKIDQEA.

This sequence belongs to the SNF2/RAD54 helicase family. ISWI subfamily. Component of the ISW2 complex, which at least consists of ISW2, ITC1, DLS1 and DPB4. May form a stable subcomplex with ITC1.

It localises to the nucleus. Catalytic component of the ISW2 complex, which acts in remodeling the chromatin by catalyzing an ATP-dependent alteration in the structure of nucleosomal DNA. The ISW2 complex is involved in coordinating transcriptional repression and in inheritance of telomeric silencing. It is involved in repression of MAT a-specific genes, INO1, and early meiotic genes during mitotic growth dependent upon transcription factor UME6 and in a parallel pathway to the RPD3-SIN3 histone deacetylase complex. This is ISWI chromatin-remodeling complex ATPase ISW2 (ISW2) from Saccharomyces cerevisiae (strain ATCC 204508 / S288c) (Baker's yeast).